Here is a 599-residue protein sequence, read N- to C-terminus: Retrotransposon Gag-like protein 5 (599 aa).

Disordered stretches follow at residues 77 to 97, 116 to 139, and 377 to 450; these read DPTPEEEEEEEEEVPFLCWPP, DYTNPDGSSDPPLSPSPSQPELHS, and FPQE…EEDE. Acidic residues predominate over residues 78-90; it reads PTPEEEEEEEEEV. Acidic residues-rich tracts occupy residues 393–432 and 439–450; these read DEMEDEEDEDEDEDYEFEEEDEDDDDEEEEEEEEEEEDKE and DSDENKYEEEDE.

The chain is Retrotransposon Gag-like protein 5 from Mus musculus (Mouse).